The primary structure comprises 119 residues: MFKKVDKKASRTKRHLRVRKKVFGTPDRPRLSVFRSEKNIYAQIIDDVNAVTIVAASSLDKEFSTNGGNKEGAKLVGAAVAKKAIEKGITEVVFDRGGYVYHGRVQELAEGAREAGLKF.

Belongs to the universal ribosomal protein uL18 family. In terms of assembly, part of the 50S ribosomal subunit; part of the 5S rRNA/L5/L18/L25 subcomplex. Contacts the 5S and 23S rRNAs.

In terms of biological role, this is one of the proteins that bind and probably mediate the attachment of the 5S RNA into the large ribosomal subunit, where it forms part of the central protuberance. In Clostridium botulinum (strain Alaska E43 / Type E3), this protein is Large ribosomal subunit protein uL18.